The sequence spans 199 residues: UPF0316 protein LA_0606 (199 aa).

The next 2 helical transmembrane spans lie at 47–67 (IAAS…TQVI) and 73–93 (VFCY…GMIL).

This sequence belongs to the UPF0316 family.

The protein localises to the cell membrane. The polypeptide is UPF0316 protein LA_0606 (Leptospira interrogans serogroup Icterohaemorrhagiae serovar Lai (strain 56601)).